The chain runs to 391 residues: Serine protease 7 (391 aa).

The N-terminal stretch at 1 to 27 is a signal peptide; that stretch reads MKSTRKVVGIFLATCLLPFTVLQNVAA. The propeptide at 28–136 is activation peptide; the sequence is QGSCRNPNQK…KCGPHSFSNK (109 aa). Residues 30-84 enclose the Clip domain; the sequence is SCRNPNQKQGQCLSIYDCQSLLSVIQQSYVSPEDRTFLRNSQCLDGVGRQPYVCC. 3 disulfide bridges follow: Cys31–Cys83, Cys41–Cys72, and Cys47–Cys84. A disordered region spans residues 91–121; sequence GSQEATSAAPPPTTTSSSSRGQDGQAGLGNL. Cystine bridges form between Cys128–Cys264, Cys167–Cys183, Cys211–Cys216, Cys310–Cys327, and Cys337–Cys366. The Peptidase S1 domain occupies 137-390; it reads VYNGNDTAID…YMDWIVETIR (254 aa). A glycan (N-linked (GlcNAc...) asparagine) is linked at Asn141. The active-site Charge relay system is the His182. Ca(2+) contacts are provided by Glu202, Asp204, Lys207, and Asp210. The active-site Charge relay system is Asp244. Ser341 acts as the Charge relay system in catalysis.

It belongs to the peptidase S1 family. CLIP subfamily. As to quaternary structure, interacts with Spn27A.

It localises to the secreted. Serine protease that, by cleaving and activating prophenoloxidase (PPO1) after immune challenge, plays an essential role in the melanization immune response to septic wounding. May function in diverse Hayan-dependent PPO1-activating cascades that are negatively controlled by different serpin proteins; Spn27A in the hemolymph and Spn77BA in the trachea. Important for the innate immune response to fungi. Regulation of melanization and PPO1 activation appears to be largely independent of the Toll signaling pathway. This is Serine protease 7 from Drosophila melanogaster (Fruit fly).